The primary structure comprises 178 residues: MSRIGNKIITMPAGVELKNDNNVVTVKGPKGELTREFNKNIEIKVEGTEITVSRPNDSKEMKTIHGTTRALLNNMVQGVSEGFKKELEMKGVGYRAQLQGNKLVLSVGKSHQDEVEAPEGITFTVATPTTIAVEGISKELVGQTAAYIRSLRSPEPYKGKGIRYVGEYVRLKEGKTGK.

Belongs to the universal ribosomal protein uL6 family. In terms of assembly, part of the 50S ribosomal subunit.

This protein binds to the 23S rRNA, and is important in its secondary structure. It is located near the subunit interface in the base of the L7/L12 stalk, and near the tRNA binding site of the peptidyltransferase center. The polypeptide is Large ribosomal subunit protein uL6 (Streptococcus uberis (strain ATCC BAA-854 / 0140J)).